The following is a 409-amino-acid chain: CUB domain-containing protein (409 aa).

The signal sequence occupies residues 1–18 (MFLFSLTVLSALVLITES). The segment covering 154-229 (TEASTTAQET…TTAPTTAPAP (76 aa)) has biased composition (low complexity). A disordered region spans residues 154–230 (TEASTTAQET…TAPTTAPAPI (77 aa)). Cysteines 232 and 257 form a disulfide. A CUB domain is found at 232-338 (CGGVLRGRGT…QEYVDYYYYD (107 aa)). Residues 389-409 (VQGAADSESEASASSESSDED) form a disordered region. Residues 392-409 (AADSESEASASSESSDED) are compositionally biased toward low complexity.

In terms of tissue distribution, component of the acid-insoluble and acid-soluble organic matrix of the aragonitic skeleton (at protein level).

Its subcellular location is the secreted. The polypeptide is CUB domain-containing protein (Acropora millepora (Staghorn coral)).